A 207-amino-acid polypeptide reads, in one-letter code: Anthranilate synthase component II (207 aa).

In terms of domain architecture, Glutamine amidotransferase type-1 spans 17-207 (RVLFVDNFDS…DVIRNFLAGL (191 aa)). Position 66–68 (66–68 (GPG)) interacts with L-glutamine. The Nucleophile; for GATase activity role is filled by cysteine 96. 146–147 (SL) is an L-glutamine binding site. Residues histidine 187 and glutamate 189 contribute to the active site.

As to quaternary structure, tetramer of two components I and two components II.

It catalyses the reaction chorismate + L-glutamine = anthranilate + pyruvate + L-glutamate + H(+). It functions in the pathway amino-acid biosynthesis; L-tryptophan biosynthesis; L-tryptophan from chorismate: step 1/5. This chain is Anthranilate synthase component II (trpG1), found in Haloarcula marismortui (strain ATCC 43049 / DSM 3752 / JCM 8966 / VKM B-1809) (Halobacterium marismortui).